A 308-amino-acid polypeptide reads, in one-letter code: Phenylcoumaran benzylic ether reductase Betv6 (308 aa).

NADP(+) is bound by residues glycine 11 to glycine 17, arginine 36, and lysine 45. Residue lysine 133 is the Proton acceptor of the active site. Arginine 137 contacts NADP(+).

This sequence belongs to the NmrA-type oxidoreductase family. Isoflavone reductase subfamily.

The catalysed reaction is (-)-dehydrodiconiferyl alcohol + NADPH + H(+) = (S)-isodihydrodehydrodiconiferyl alcohol + NADP(+). The enzyme catalyses (+)-dehydrodiconiferyl alcohol + NADPH + H(+) = (R)-isodihydrodehydrodiconiferyl alcohol + NADP(+). Oxidoreductase involved in lignan biosynthesis. Catalyzes the NADPH-dependent reduction of phenylcoumaran benzylic ethers. Converts dehydrodiconiferyl alcohol (DDC) to isodihydrodehydrodiconiferyl alcohol (IDDDC). This Betula pendula (European white birch) protein is Phenylcoumaran benzylic ether reductase Betv6.